The chain runs to 574 residues: Methionine--tRNA ligase (574 aa).

A 'HIGH' region motif is present at residues 11–21; that stretch reads PYINGIKHLGN. Zn(2+) is bound by residues cysteine 143, cysteine 146, cysteine 156, and cysteine 159. The 'KMSKS' region signature appears at 345-349; that stretch reads KFSTS. Threonine 348 is an ATP binding site.

It belongs to the class-I aminoacyl-tRNA synthetase family. MetG type 1 subfamily. Monomer. Zn(2+) is required as a cofactor.

It is found in the cytoplasm. The enzyme catalyses tRNA(Met) + L-methionine + ATP = L-methionyl-tRNA(Met) + AMP + diphosphate. Its function is as follows. Is required not only for elongation of protein synthesis but also for the initiation of all mRNA translation through initiator tRNA(fMet) aminoacylation. The chain is Methionine--tRNA ligase from Streptomyces avermitilis (strain ATCC 31267 / DSM 46492 / JCM 5070 / NBRC 14893 / NCIMB 12804 / NRRL 8165 / MA-4680).